A 160-amino-acid polypeptide reads, in one-letter code: MAAKKLTHLDEKGAARMVDVSSKPVTSRSATAKGRVTMQPATLKLIAEDGLKKGNALEVARLAGIMAAKRTADLIPLCHPLAITKVEVDLKMDKKAGTVEVEATVKVAGQTGVEMEALTAVSVTCLTLYDMAKAVDRGMTIGDIRLTRKTGGKSGDYKAK.

Residues 77–79 and 115–116 contribute to the substrate site; these read LCH and ME. Residue D130 is part of the active site.

This sequence belongs to the MoaC family. In terms of assembly, homohexamer; trimer of dimers.

The catalysed reaction is (8S)-3',8-cyclo-7,8-dihydroguanosine 5'-triphosphate = cyclic pyranopterin phosphate + diphosphate. It functions in the pathway cofactor biosynthesis; molybdopterin biosynthesis. Its function is as follows. Catalyzes the conversion of (8S)-3',8-cyclo-7,8-dihydroguanosine 5'-triphosphate to cyclic pyranopterin monophosphate (cPMP). In Parvibaculum lavamentivorans (strain DS-1 / DSM 13023 / NCIMB 13966), this protein is Cyclic pyranopterin monophosphate synthase.